Consider the following 198-residue polypeptide: Clytin (198 aa).

The propeptide occupies 1–9 (MADTASKYA). 4 EF-hand domains span residues 20–55 (KWVN…DICA), 60–95 (TPEQ…VDGW), 119–148 (EAVF…SGIC), and 149–184 (SSDE…FWYT). Ca(2+) is bound by residues Asp-33, Asn-35, Asp-37, Lys-39, and Glu-44. Ca(2+) is bound by residues Asp-126, Asp-128, Ser-130, Ser-132, Glu-137, Asp-162, Asp-164, Ser-166, Lys-168, and Glu-173.

The protein belongs to the aequorin family.

Its function is as follows. Ca(2+)-dependent bioluminescence photoprotein. Displays an emission peak at 470 nm (blue light). Trace amounts of calcium ion trigger the intramolecular oxidation of the chromophore, coelenterazine into coelenteramide and CO(2) with the concomitant emission of light. This chain is Clytin, found in Clytia gregaria (Gregarious jellyfish).